We begin with the raw amino-acid sequence, 374 residues long: Probable aminopeptidase YDR415C (374 aa).

A signal peptide spans 1 to 18 (MRIQSLFVLFNVAIIAWS). The Zn(2+) site is built by histidine 177, aspartate 196, glutamate 235, aspartate 262, and histidine 340.

This sequence belongs to the peptidase M28 family. M28E subfamily. Zn(2+) is required as a cofactor.

This Saccharomyces cerevisiae (strain ATCC 204508 / S288c) (Baker's yeast) protein is Probable aminopeptidase YDR415C.